The primary structure comprises 141 residues: Acetyltransferase YpeA (141 aa).

An N-acetyltransferase domain is found at 1–141 (MEIRVFRQED…GKRLIEDEEY (141 aa)).

Belongs to the acetyltransferase family. YpeA subfamily.

The protein is Acetyltransferase YpeA (ypeA) of Escherichia coli (strain K12).